We begin with the raw amino-acid sequence, 88 residues long: Large ribosomal subunit protein eL15 (88 aa).

The protein belongs to the eukaryotic ribosomal protein eL15 family.

The polypeptide is Large ribosomal subunit protein eL15 (RPL15) (Brassica napus (Rape)).